We begin with the raw amino-acid sequence, 372 residues long: 3-dehydroquinate synthase (372 aa).

NAD(+) contacts are provided by residues 116–120, 140–141, K153, K162, and 180–183; these read GVVGD, TT, and TLNT. Positions 195, 260, and 277 each coordinate Zn(2+).

The protein belongs to the sugar phosphate cyclases superfamily. Dehydroquinate synthase family. The cofactor is Co(2+). Zn(2+) serves as cofactor. Requires NAD(+) as cofactor.

It is found in the cytoplasm. The enzyme catalyses 7-phospho-2-dehydro-3-deoxy-D-arabino-heptonate = 3-dehydroquinate + phosphate. It participates in metabolic intermediate biosynthesis; chorismate biosynthesis; chorismate from D-erythrose 4-phosphate and phosphoenolpyruvate: step 2/7. In terms of biological role, catalyzes the conversion of 3-deoxy-D-arabino-heptulosonate 7-phosphate (DAHP) to dehydroquinate (DHQ). This chain is 3-dehydroquinate synthase, found in Prochlorococcus marinus (strain MIT 9303).